Reading from the N-terminus, the 507-residue chain is Phytoene dehydrogenase (507 aa).

12 to 45 (VVVGAGLAGLAAALHLLGAGRRVTVVEREDVPGG) provides a ligand contact to FAD.

This sequence belongs to the carotenoid/retinoid oxidoreductase family. FAD is required as a cofactor.

The protein operates within carotenoid biosynthesis; lycopene biosynthesis. Functionally, this enzyme converts phytoene into zeta-carotene via the intermediary of phytofluene by the symmetrical introduction of two double bonds at the C-11 and C-11' positions of phytoene. This is Phytoene dehydrogenase (crtI) from Streptomyces griseus.